The primary structure comprises 295 residues: Ribosomal protein L11 methyltransferase (295 aa).

S-adenosyl-L-methionine-binding residues include Thr146, Gly167, Asp189, and Asn231.

The protein belongs to the methyltransferase superfamily. PrmA family.

It localises to the cytoplasm. The catalysed reaction is L-lysyl-[protein] + 3 S-adenosyl-L-methionine = N(6),N(6),N(6)-trimethyl-L-lysyl-[protein] + 3 S-adenosyl-L-homocysteine + 3 H(+). Methylates ribosomal protein L11. This Vibrio campbellii (strain ATCC BAA-1116) protein is Ribosomal protein L11 methyltransferase.